Consider the following 137-residue polypeptide: Ribosome-binding factor A (137 aa).

The tract at residues 110–137 (RIQQEKEGATDDRDQNDSGEDATPHSND) is disordered. A compositionally biased stretch (basic and acidic residues) spans 112 to 125 (QQEKEGATDDRDQN).

It belongs to the RbfA family. As to quaternary structure, monomer. Binds 30S ribosomal subunits, but not 50S ribosomal subunits or 70S ribosomes.

It is found in the cytoplasm. One of several proteins that assist in the late maturation steps of the functional core of the 30S ribosomal subunit. Associates with free 30S ribosomal subunits (but not with 30S subunits that are part of 70S ribosomes or polysomes). Required for efficient processing of 16S rRNA. May interact with the 5'-terminal helix region of 16S rRNA. The sequence is that of Ribosome-binding factor A from Rhodopirellula baltica (strain DSM 10527 / NCIMB 13988 / SH1).